The following is a 406-amino-acid chain: Corticosteroid-binding globulin (406 aa).

The N-terminal stretch at M1–A22 is a signal peptide. Residues N31 and N96 are each glycosylated (N-linked (GlcNAc...) asparagine). Q255 is a cortisol binding site. The N-linked (GlcNAc...) asparagine glycan is linked to N261. D287 provides a ligand contact to cortisol. N-linked (GlcNAc...) asparagine glycosylation is found at N331 and N360. W394 is a binding site for cortisol.

It belongs to the serpin family. As to expression, expressed by the liver; secreted in plasma.

Its subcellular location is the secreted. Major transport protein for glucocorticoids and progestins in the blood of almost all vertebrate species. In Saimiri sciureus (Common squirrel monkey), this protein is Corticosteroid-binding globulin (SERPINA6).